Reading from the N-terminus, the 1063-residue chain is Presequence protease, mitochondrial (1063 aa).

The N-terminal 33 residues, 1–33 (MLRLANRVSRKDSGNLGIAQLKKRLLATSGVSQ), are a transit peptide targeting the mitochondrion. His-105 contacts Zn(2+). The active-site Proton acceptor is Glu-108. Residue His-109 participates in Zn(2+) binding. Residue Glu-181 is part of the active site. Glu-206 contributes to the Zn(2+) binding site.

It belongs to the peptidase M16 family. PreP subfamily. In terms of assembly, monomer and homodimer; homodimerization is induced by binding of the substrate. It depends on Zn(2+) as a cofactor.

Its subcellular location is the mitochondrion intermembrane space. It is found in the mitochondrion matrix. Its function is as follows. Degrades mitochondrial transit peptides after their cleavage in the intermembrane space or in the matrix, and presequence peptides; clearance of these peptides is required to keep the presequence processing machinery running. Preferentially cleaves the N-terminal side of paired basic amino acid residues. Also degrades other unstructured peptides. May function as an ATP-dependent peptidase as opposed to a metalloendopeptidase. This Debaryomyces hansenii (strain ATCC 36239 / CBS 767 / BCRC 21394 / JCM 1990 / NBRC 0083 / IGC 2968) (Yeast) protein is Presequence protease, mitochondrial (CYM1).